Reading from the N-terminus, the 734-residue chain is Threonine--tRNA ligase, cytoplasmic (734 aa).

The segment at 1–41 is disordered; it reads MSASEAGVTEQVKKLSVKDSSNDAVKPNKKENKKSKQQSLY. Positions 11-30 are enriched in basic and acidic residues; the sequence is QVKKLSVKDSSNDAVKPNKK. The TGS domain maps to 69–135; the sequence is SMPRVPLKIV…EGEANEEIKL (67 aa). Phosphoserine occurs at positions 195 and 289. 2 positions are modified to phosphothreonine: threonine 297 and threonine 381. Phosphoserine occurs at positions 453 and 457. Phosphothreonine is present on threonine 460. The residue at position 605 (serine 605) is a Phosphoserine.

It belongs to the class-II aminoacyl-tRNA synthetase family.

The protein resides in the cytoplasm. The enzyme catalyses tRNA(Thr) + L-threonine + ATP = L-threonyl-tRNA(Thr) + AMP + diphosphate + H(+). The chain is Threonine--tRNA ligase, cytoplasmic (THS1) from Saccharomyces cerevisiae (strain ATCC 204508 / S288c) (Baker's yeast).